Reading from the N-terminus, the 78-residue chain is Large ribosomal subunit protein bL28 (78 aa).

This sequence belongs to the bacterial ribosomal protein bL28 family.

This is Large ribosomal subunit protein bL28 from Methylococcus capsulatus (strain ATCC 33009 / NCIMB 11132 / Bath).